We begin with the raw amino-acid sequence, 779 residues long: Probable phosphoketolase 2 (779 aa).

This sequence belongs to the XFP family. It depends on thiamine diphosphate as a cofactor.

The chain is Probable phosphoketolase 2 from Rhizobium meliloti (strain 1021) (Ensifer meliloti).